A 448-amino-acid polypeptide reads, in one-letter code: Adenylyltransferase and sulfurtransferase UBA4 (448 aa).

ATP contacts are provided by residues Gly-88, Asp-109, 116 to 120, Lys-133, and 177 to 178; these read SNLHR and DT. Residues Cys-219 and Cys-222 each contribute to the Zn(2+) site. Cys-236 (glycyl thioester intermediate; for adenylyltransferase activity) is an active-site residue. Residues Cys-297 and Cys-300 each coordinate Zn(2+). The Rhodanese domain maps to 349–446; that stretch reads QGENSILIDV…WSKEIDSKIP (98 aa). The active-site Cysteine persulfide intermediate; for sulfurtransferase activity is the Cys-405.

This sequence in the N-terminal section; belongs to the HesA/MoeB/ThiF family. UBA4 subfamily. Zn(2+) serves as cofactor.

The protein resides in the cytoplasm. Its subcellular location is the cytosol. It functions in the pathway tRNA modification; 5-methoxycarbonylmethyl-2-thiouridine-tRNA biosynthesis. Its function is as follows. Plays a central role in 2-thiolation of mcm(5)S(2)U at tRNA wobble positions of cytosolic tRNA(Lys), tRNA(Glu) and tRNA(Gln). Acts by mediating the C-terminal thiocarboxylation of sulfur carrier URM1. Its N-terminus first activates URM1 as acyl-adenylate (-COAMP), then the persulfide sulfur on the catalytic cysteine is transferred to URM1 to form thiocarboxylation (-COSH) of its C-terminus. The reaction probably involves hydrogen sulfide that is generated from the persulfide intermediate and that acts as a nucleophile towards URM1. Subsequently, a transient disulfide bond is formed. Does not use thiosulfate as sulfur donor; NFS1 probably acting as a sulfur donor for thiocarboxylation reactions. Prior mcm(5) tRNA modification by the elongator complex is required for 2-thiolation. May also be involved in protein urmylation. In Debaryomyces hansenii (strain ATCC 36239 / CBS 767 / BCRC 21394 / JCM 1990 / NBRC 0083 / IGC 2968) (Yeast), this protein is Adenylyltransferase and sulfurtransferase UBA4.